The following is a 74-amino-acid chain: MARPFFRRRKSCPFSGKNAPKIDYKDVRLLQGFMSERGKIVPSRITAVSAKKQRELSQAIKRARHIGLLPYIVK.

The protein belongs to the bacterial ribosomal protein bS18 family. Part of the 30S ribosomal subunit. Forms a tight heterodimer with protein bS6.

Its function is as follows. Binds as a heterodimer with protein bS6 to the central domain of the 16S rRNA, where it helps stabilize the platform of the 30S subunit. This Novosphingobium aromaticivorans (strain ATCC 700278 / DSM 12444 / CCUG 56034 / CIP 105152 / NBRC 16084 / F199) protein is Small ribosomal subunit protein bS18.